The following is a 2293-amino-acid chain: Protein Ycf2 B (2293 aa).

ATP is bound at residue 1647 to 1654 (GSIGTGRS).

Belongs to the Ycf2 family.

It is found in the plastid. It localises to the chloroplast stroma. Probable ATPase of unknown function. Its presence in a non-photosynthetic plant (Epifagus virginiana) and experiments in tobacco indicate that it has an essential function which is probably not related to photosynthesis. This Crucihimalaya wallichii (Rock-cress) protein is Protein Ycf2 B.